A 652-amino-acid polypeptide reads, in one-letter code: DNA ligase (652 aa).

NAD(+)-binding positions include 29–33, 78–79, and glutamate 107; these read DSDYD and SL. The active-site N6-AMP-lysine intermediate is lysine 109. The NAD(+) site is built by arginine 130, glutamate 164, lysine 278, and lysine 302. Residues cysteine 395, cysteine 398, cysteine 413, and cysteine 418 each coordinate Zn(2+). The region spanning 577-652 is the BRCT domain; that stretch reads NSDAALFGLT…IEDEDWLRKF (76 aa).

This sequence belongs to the NAD-dependent DNA ligase family. LigA subfamily. It depends on Mg(2+) as a cofactor. Mn(2+) is required as a cofactor.

It carries out the reaction NAD(+) + (deoxyribonucleotide)n-3'-hydroxyl + 5'-phospho-(deoxyribonucleotide)m = (deoxyribonucleotide)n+m + AMP + beta-nicotinamide D-nucleotide.. In terms of biological role, DNA ligase that catalyzes the formation of phosphodiester linkages between 5'-phosphoryl and 3'-hydroxyl groups in double-stranded DNA using NAD as a coenzyme and as the energy source for the reaction. It is essential for DNA replication and repair of damaged DNA. The sequence is that of DNA ligase from Streptococcus pyogenes serotype M6 (strain ATCC BAA-946 / MGAS10394).